Here is a 436-residue protein sequence, read N- to C-terminus: tRNA-2-methylthio-N(6)-dimethylallyladenosine synthase (436 aa).

The MTTase N-terminal domain occupies 1-115 (MRVFFKTYGC…IAEVLQKAAR (115 aa)). The [4Fe-4S] cluster site is built by Cys10, Cys46, Cys80, Cys151, Cys155, and Cys158. The 232-residue stretch at 137–368 (RFSKHHAWIT…LELQKQINRE (232 aa)) folds into the Radical SAM core domain. Positions 371-432 (MQYLGKVVEI…AGPLYGKLQK (62 aa)) constitute a TRAM domain.

Belongs to the methylthiotransferase family. MiaB subfamily. As to quaternary structure, monomer. The cofactor is [4Fe-4S] cluster.

Its subcellular location is the cytoplasm. The catalysed reaction is N(6)-dimethylallyladenosine(37) in tRNA + (sulfur carrier)-SH + AH2 + 2 S-adenosyl-L-methionine = 2-methylsulfanyl-N(6)-dimethylallyladenosine(37) in tRNA + (sulfur carrier)-H + 5'-deoxyadenosine + L-methionine + A + S-adenosyl-L-homocysteine + 2 H(+). Catalyzes the methylthiolation of N6-(dimethylallyl)adenosine (i(6)A), leading to the formation of 2-methylthio-N6-(dimethylallyl)adenosine (ms(2)i(6)A) at position 37 in tRNAs that read codons beginning with uridine. This chain is tRNA-2-methylthio-N(6)-dimethylallyladenosine synthase, found in Pseudothermotoga lettingae (strain ATCC BAA-301 / DSM 14385 / NBRC 107922 / TMO) (Thermotoga lettingae).